Here is a 359-residue protein sequence, read N- to C-terminus: Serine/threonine-protein phosphatase 2A activator 2 (359 aa).

Belongs to the PTPA-type PPIase family.

It localises to the cytoplasm. It catalyses the reaction [protein]-peptidylproline (omega=180) = [protein]-peptidylproline (omega=0). In terms of biological role, PPIases accelerate the folding of proteins. It catalyzes the cis-trans isomerization of proline imidic peptide bonds in oligopeptides. Acts as a regulatory subunit for PP2A-like phosphatases modulating their activity or substrate specificity, probably by inducing a conformational change in the catalytic subunit, a direct target of the PPIase. Can reactivate inactive phosphatase PP2A-phosphatase methylesterase complexes (PP2Ai) in presence of ATP and Mg(2+) by dissociating the inactive form from the complex. In Eremothecium gossypii (strain ATCC 10895 / CBS 109.51 / FGSC 9923 / NRRL Y-1056) (Yeast), this protein is Serine/threonine-protein phosphatase 2A activator 2 (RRD2).